We begin with the raw amino-acid sequence, 3124 residues long: Collagen alpha-1(XII) chain (3124 aa).

The signal sequence occupies residues 1–23 (MRTALCSAVAALCAAALLSSIEA). The Fibronectin type-III 1 domain maps to 27–117 (PPSDLNFTII…GQLTIQTGGP (91 aa)). N-linked (GlcNAc...) asparagine glycosylation is present at asparagine 32. Positions 139 to 311 (DLVFLVDGSW…DGIVDIQNEI (173 aa)) constitute a VWFA 1 domain. A glycan (O-linked (Xyl...) (chondroitin sulfate) serine) is linked at serine 328. Residues 335 to 424 (PASNLVATQI…ITIMEKTQQV (90 aa)) enclose the Fibronectin type-III 2 domain. Positions 439–615 (DVVFLVDGSY…RISFELTQSV (177 aa)) constitute a VWFA 2 domain. Fibronectin type-III domains follow at residues 633-722 (PAKN…LEVK), 724-815 (APRN…VRGN), 816-906 (PRNL…LEER), 908-998 (SPRN…VSQS), 999-1087 (ARTV…ASPF), and 1089-1179 (PPRN…TLSD). O-linked (Xyl...) (chondroitin sulfate) serine glycosylation is found at serine 797, serine 890, and serine 981. 3 N-linked (GlcNAc...) asparagine glycosylation sites follow: asparagine 1006, asparagine 1032, and asparagine 1044. Residues 1075–1100 (KSRKAEGTTASPFKPPRNLRTSDSTM) are disordered. The VWFA 3 domain maps to 1199–1371 (DIVLLVDGSW…SFLASIGEDV (173 aa)). 10 Fibronectin type-III domains span residues 1387-1476 (PPSN…YPLS), 1477-1568 (SVRN…LPLP), 1569-1659 (GPRG…VPSP), 1660-1756 (VNLR…TPAP), 1759-1853 (GPRN…TVKN), 1854-1939 (MLVY…LERG), 1940-2030 (TPRN…LPRS), 2031-2121 (GPRN…VGLL), 2122-2210 (PPQN…LYLN), and 2211-2299 (VTDL…LKPT). N-linked (GlcNAc...) asparagine glycosylation occurs at asparagine 1512. An N-linked (GlcNAc...) asparagine glycan is attached at asparagine 1767. 2 N-linked (GlcNAc...) asparagine glycosylation sites follow: asparagine 2210 and asparagine 2273. The region spanning 2327 to 2500 (DIVFLTDASW…DAFEKIQDNL (174 aa)) is the VWFA 4 domain. The nonhelical region (NC3) stretch occupies residues 2455–2750 (SGFSVFVVGV…NACTCTQDSV (296 aa)). In terms of domain architecture, Laminin G-like spans 2524–2716 (GFKMLESYNL…IQNFDIVCSP (193 aa)). N-linked (GlcNAc...) asparagine glycans are attached at residues asparagine 2532 and asparagine 2683. Disordered stretches follow at residues 2749–2900 (SVGP…GDRG) and 2935–3080 (PNDY…EGEP). Collagen-like domains lie at 2751-2802 (GPPG…GPNG), 2807-2858 (GEPG…GPRG), and 2859-2900 (PPGP…GDRG). Residues 2751–2902 (GPPGPPGPPG…KGEKGDRGDI (152 aa)) form a triple-helical region (COL2) with 1 imperfection region. 2 stretches are compositionally biased toward pro residues: residues 2752-2761 (PPGPPGPPGG) and 2788-2798 (PPGPQGPPGPQ). The span at 2821–2830 (PGLPGRSGTP) shows a compositional bias: low complexity. A compositionally biased stretch (pro residues) spans 2832-2841 (LPGPPGPVGP). Composition is skewed to low complexity over residues 2842-2854 (PGERGFTGKDGPT) and 2865-2878 (APGVPGVAGPSGKP). A Cell attachment site motif is present at residues 2899 to 2901 (RGD). A nonhelical region (NC2) region spans residues 2903 to 2945 (ASQNMMRAVARQVCEQLINGQMSRFNQMLNQIPNDYYSNRNQP). Residues 2935-2944 (PNDYYSNRNQ) are compositionally biased toward polar residues. The span at 2945-2954 (PGPPGPPGPP) shows a compositional bias: pro residues. One can recognise a Collagen-like 4 domain in the interval 2945–2994 (PGPPGPPGPPGAAGTRGEPGPGGRPGFPGPPGVQGPPGERGMPGEKGERG). The triple-helical region (COL1) with 2 imperfections stretch occupies residues 2946–3048 (GPPGPPGPPG…RGPPGPPGYC (103 aa)). Residues 2961–2970 (GEPGPGGRPG) are compositionally biased toward gly residues. The span at 3010 to 3024 (QGESRTGPPGSTGSR) shows a compositional bias: low complexity. The segment at 3049 to 3124 (DSSQCASIPY…SLSRKAKRKP (76 aa)) is nonhelical region (NC1).

Belongs to the fibril-associated collagens with interrupted helices (FACIT) family. Trimer of identical chains each containing 190 kDa of non-triple-helical sequences. Post-translationally, the triple-helical tail is stabilized by disulfide bonds at each end. Prolines at the third position of the tripeptide repeating unit (G-X-Y) are hydroxylated in some or all of the chains. In terms of processing, O-glycosylated; glycosaminoglycan of chondroitin-sulfate type. In terms of tissue distribution, type XII collagen is present in tendons, ligaments, perichondrium, and periosteum, all dense connective tissues containing type I collagen.

The protein resides in the secreted. Its subcellular location is the extracellular space. The protein localises to the extracellular matrix. In terms of biological role, type XII collagen interacts with type I collagen-containing fibrils, the COL1 domain could be associated with the surface of the fibrils, and the COL2 and NC3 domains may be localized in the perifibrillar matrix. The protein is Collagen alpha-1(XII) chain (COL12A1) of Gallus gallus (Chicken).